Consider the following 682-residue polypeptide: Epithelial sodium channel subunit alpha (682 aa).

Residues Met-1–Ala-111 are Cytoplasmic-facing. The segment at Ala-34–Glu-69 is disordered. The chain crosses the membrane as a helical span at residues Phe-112–Phe-132. At Gly-133–Ser-586 the chain is on the extracellular side. 10 disulfides stabilise this stretch: Cys-159–Cys-329, Cys-253–Cys-260, Cys-306–Cys-313, Cys-418–Cys-503, Cys-440–Cys-480, Cys-440–Cys-499, Cys-444–Cys-495, Cys-453–Cys-480, Cys-453–Cys-503, and Cys-455–Cys-469. Asn-191 carries an N-linked (GlcNAc...) asparagine glycan. Residues Arg-201 to Ser-267 form a gating release of inhibition by proteolysis (GRIP); protease-sensitive region that is responsible for the proteolytic activation of the channel region. Residues Pro-221–Arg-240 are disordered. Asn-504 carries an N-linked (GlcNAc...) asparagine glycan. The chain crosses the membrane as a helical span at residues Val-587–Met-607. Residues Leu-608–Pro-682 are Cytoplasmic-facing. A PY motif; recruits WW domain-containing proteins and is thereby required for ubiquitination and inhibition of the channel by NEDD4 and NEDD4L motif is present at residues Pro-653 to Tyr-657.

It belongs to the amiloride-sensitive sodium channel (TC 1.A.6) family. SCNN1A subfamily. In terms of assembly, heterotrimer; containing an alpha/SCNN1A, a beta/SCNN1B and a gamma/SCNN1G subunit. Interacts with WWP1 (via WW domains). Interacts with WWP2 (via WW domains); inhibits the channel. Interacts with BPIFA1; the interaction is indirect via SCNN1B and inhibits the proteolytic processing of SCNN1A and SCNN1G and the activation of ENaC. Interacts with the full-length immature form of PCSK9 (pro-PCSK9). In terms of processing, ubiquitinated. Can be ubiquitinated at multiple sites and undergo monoubiquitination and polyubiquitination. Ubiquitination by NEDD4 or NEDD4L inhibits the ENaC channel through endocytosis, intracellular retention and degradation of its individual subunits. N-glycosylated. Post-translationally, ENaC is activated through the proteolytic maturation of its subunits. Furin cleaves the SCNN1A subunit, which results in a stepwise increase in the open probability of the channel due to the release of an inhibitory tract. BPIFA1, which is recruited by the SCNN1B subunit, prevents the proteolytic activation of ENaC.

The protein resides in the apical cell membrane. Its subcellular location is the cell projection. It localises to the cilium. It is found in the cytoplasmic granule. The protein localises to the cytoplasm. The protein resides in the cytoplasmic vesicle. Its subcellular location is the secretory vesicle. It localises to the acrosome. It is found in the flagellum. It carries out the reaction Na(+)(in) = Na(+)(out). With respect to regulation, originally identified and characterized by its inhibition by the diuretic drug amiloride. Its function is as follows. This is one of the three pore-forming subunits of the heterotrimeric epithelial sodium channel (ENaC), a critical regulator of sodium balance and fluid homeostasis. ENaC operates in epithelial tissues, where it mediates the electrodiffusion of sodium ions from extracellular fluid through the apical membrane of cells, with water following osmotically. It plays a key role in maintaining sodium homeostasis through electrogenic sodium reabsorption in the kidneys. Additionally, ENaC is essential for airway surface liquid homeostasis, which is crucial for proper mucus clearance. The protein is Epithelial sodium channel subunit alpha of Cavia porcellus (Guinea pig).